The sequence spans 626 residues: Probable potassium transport system protein Kup 3 (626 aa).

Transmembrane regions (helical) follow at residues Leu10 to Leu30, Val51 to Val71, Val107 to Ile127, Pro141 to Phe161, Phe173 to Val193, Leu216 to Tyr236, Trp251 to Leu271, Leu293 to Phe313, Ile341 to Phe361, Tyr371 to Val391, Ala401 to Val421, and Ile423 to Thr443.

Belongs to the HAK/KUP transporter (TC 2.A.72) family.

It is found in the cell inner membrane. It catalyses the reaction K(+)(in) + H(+)(in) = K(+)(out) + H(+)(out). In terms of biological role, transport of potassium into the cell. Likely operates as a K(+):H(+) symporter. The chain is Probable potassium transport system protein Kup 3 from Dechloromonas aromatica (strain RCB).